Here is a 255-residue protein sequence, read N- to C-terminus: UDP-2,3-diacylglucosamine hydrolase (255 aa).

Mn(2+) contacts are provided by aspartate 8, histidine 10, aspartate 41, asparagine 79, and histidine 114. Position 79-80 (79-80) interacts with substrate; sequence NR. 5 residues coordinate substrate: aspartate 122, serine 160, asparagine 164, lysine 167, and histidine 195. The Mn(2+) site is built by histidine 195 and histidine 197.

The protein belongs to the LpxH family. Requires Mn(2+) as cofactor.

The protein resides in the cell inner membrane. The catalysed reaction is UDP-2-N,3-O-bis[(3R)-3-hydroxytetradecanoyl]-alpha-D-glucosamine + H2O = 2-N,3-O-bis[(3R)-3-hydroxytetradecanoyl]-alpha-D-glucosaminyl 1-phosphate + UMP + 2 H(+). It participates in glycolipid biosynthesis; lipid IV(A) biosynthesis; lipid IV(A) from (3R)-3-hydroxytetradecanoyl-[acyl-carrier-protein] and UDP-N-acetyl-alpha-D-glucosamine: step 4/6. Its function is as follows. Hydrolyzes the pyrophosphate bond of UDP-2,3-diacylglucosamine to yield 2,3-diacylglucosamine 1-phosphate (lipid X) and UMP by catalyzing the attack of water at the alpha-P atom. Involved in the biosynthesis of lipid A, a phosphorylated glycolipid that anchors the lipopolysaccharide to the outer membrane of the cell. In Hamiltonella defensa subsp. Acyrthosiphon pisum (strain 5AT), this protein is UDP-2,3-diacylglucosamine hydrolase.